Here is a 797-residue protein sequence, read N- to C-terminus: N-acetylneuraminate (7)9-O-acetyltransferase (797 aa).

Residues 1 to 18 (MAALAYNLGKREINHYFS) lie on the Cytoplasmic side of the membrane. A helical membrane pass occupies residues 19–39 (VRSAKVLALVAVLLLAACHLA). Over 40–313 (SRRYRGNDSC…QPRPPLTLIQ (274 aa)) the chain is Lumenal. The N-linked (GlcNAc...) asparagine glycan is linked to N46. S94 (acyl-ester intermediate) is an active-site residue. 2 N-linked (GlcNAc...) asparagine glycosylation sites follow: N175 and N187. Residues D270 and H273 contribute to the active site. Residues 314–334 (KLAACFFTLSIIGYFIFYVIH) form a helical membrane-spanning segment. Residues 335–363 (RNAHRKNKPCTDLESGEEKKNIINTPVSS) lie on the Cytoplasmic side of the membrane. A helical membrane pass occupies residues 364–384 (LEILLQSFCKLGLIMAYFYMC). At 385-395 (DRANLFMKENK) the chain is on the lumenal side. Residues 396–416 (FYTHSSFFIPIIYILVLGVFY) traverse the membrane as a helical segment. At 417–439 (NENTKETKVLNREQTDEWKGWMQ) the chain is on the cytoplasmic side. Residues 440–460 (LVILIYHISGASTFLPVYMHI) form a helical membrane-spanning segment. R461 is a topological domain (lumenal). The helical transmembrane segment at 462–482 (VLVAAYLFQTGYGHFSYFWIK) threads the bilayer. Residues 483–486 (GDFG) are Cytoplasmic-facing. Residues 487–507 (IHRVCQVLFRLNFLVVVLCIV) form a helical membrane-spanning segment. Residues 508-513 (MDRPYQ) are Lumenal-facing. A helical transmembrane segment spans residues 514–534 (FYYFVPLVTVWFMVIYVTLAL). Residues 535-546 (WPQITQKKANGN) are Cytoplasmic-facing. Residues 547 to 567 (FFWYLGLLLKLGLLLLCIWFL) traverse the membrane as a helical segment. Topologically, residues 568 to 599 (AYSQGAFEKIFSLWPLSKCFELEGSVYEWWFR) are lumenal. Residues 600–620 (WRLDRYVVFHGVLFAFIYLAL) form a helical membrane-spanning segment. Topologically, residues 621–638 (QRRQILSEGKGEPLFSNK) are cytoplasmic. The chain crosses the membrane as a helical span at residues 639 to 659 (ISNFLLFVSVVSFLTYSIWAS). The Lumenal segment spans residues 660–671 (SCKNKAECNELH). A helical membrane pass occupies residues 672-692 (PSVSVVQIVAFILIRNIPGYA). Over 693–698 (RSIYSS) the chain is Cytoplasmic. The helical transmembrane segment at 699-719 (FFAWFGKISLELFICQYHIWL) threads the bilayer. At 720–725 (AADTRG) the chain is on the lumenal side. The chain crosses the membrane as a helical span at residues 726–746 (ILVLIPGNPTLNIIVSTFIFV). Residues 747–770 (CVAHEISQITTDLAQVVIPKDNPS) lie on the Cytoplasmic side of the membrane. Residues 771–791 (LFRRLACTIAFFGGVLILSSI) traverse the membrane as a helical segment. Residues 792–797 (QDKSRL) are Lumenal-facing.

Belongs to the PC-esterase family. CASD1 subfamily. N-glycosylated. Ubiquitously expressed.

Its subcellular location is the golgi apparatus membrane. It catalyses the reaction CMP-N-acetyl-beta-neuraminate + acetyl-CoA = CMP-N-acetyl-9-O-acetyl-beta-neuraminate + CoA. It carries out the reaction a ganglioside GD3 (d18:1(4E)) + acetyl-CoA = a ganglioside Ac-O-7-GD3(d18:1(4E)) + CoA. The enzyme catalyses CMP-N-acetyl-beta-neuraminate + acetyl-CoA = CMP-N-acetyl-7-O-acetyl-beta-neuraminate + CoA. Its function is as follows. Key enzyme in the biosynthesis of O-acetylated (O-Ac) sialoglycans such as gangliosides O-AcGD3 and O-AcGD2, which affect various processes such as cell-cell interactions, host-pathogen recognition. Catalyzes the transfer of an acetyl group from a donor, the acetyl-coenzyme-A molecule (acetyl-CoA), to the C7/8/9 OH-position of a sialic acid residue. The primary site of O-acetyl group transfer on sialic acid seems to depend on cell type and can be C7, from which the O-acetyl group could subsequently migrate to the C8 and then to the C9 position, or at C9 with possibility of migrating to the C8 and then to the C7 position. Together with ST8SIA1 (GD3 synthase) it increases the levels of ganglioside Ac-O-7-GD3. Can transfer the acetyl group from acetyl-CoA to free sialate (N-acetylneuraminate, Neu5Ac) in vitro, but has preferred substrate specificity for CMP-activated sialate (CMP-Neu5Ac), resulting in the formation of 9-O-acetylated CMP-Neu5Ac (CMP-Neu5,9Ac2). CMP-Neu5,9Ac2 may be used by sialyltransferases as a sialate donor for glycoconjugate acceptors such as ganglioside GD3. O-acetylation at position C9 of ganglioside GD3 can counteract the pro-apoptotic effects of the ganglioside GD3 in tumor cells. The chain is N-acetylneuraminate (7)9-O-acetyltransferase from Mus musculus (Mouse).